The chain runs to 465 residues: 3-isopropylmalate dehydratase large subunit (465 aa).

[4Fe-4S] cluster contacts are provided by cysteine 347, cysteine 407, and cysteine 410. Residues 417 to 443 (TLKPGERSASTSNRNFEGRQGKGGRTH) form a disordered region.

This sequence belongs to the aconitase/IPM isomerase family. LeuC type 1 subfamily. Heterodimer of LeuC and LeuD. [4Fe-4S] cluster serves as cofactor.

It carries out the reaction (2R,3S)-3-isopropylmalate = (2S)-2-isopropylmalate. The protein operates within amino-acid biosynthesis; L-leucine biosynthesis; L-leucine from 3-methyl-2-oxobutanoate: step 2/4. Its function is as follows. Catalyzes the isomerization between 2-isopropylmalate and 3-isopropylmalate, via the formation of 2-isopropylmaleate. The polypeptide is 3-isopropylmalate dehydratase large subunit (Thermobifida fusca (strain YX)).